An 89-amino-acid chain; its full sequence is Small ribosomal subunit protein bS20 (89 aa).

The protein belongs to the bacterial ribosomal protein bS20 family.

Functionally, binds directly to 16S ribosomal RNA. This is Small ribosomal subunit protein bS20 from Solidesulfovibrio magneticus (strain ATCC 700980 / DSM 13731 / RS-1) (Desulfovibrio magneticus).